A 73-amino-acid polypeptide reads, in one-letter code: U-scoloptoxin(15)-Sm3a (73 aa).

An N-terminal signal peptide occupies residues Met1 to Ala23.

The protein belongs to the scoloptoxin-15 family. Post-translationally, contains 2 disulfide bonds. Expressed by the venom gland.

The protein localises to the secreted. The chain is U-scoloptoxin(15)-Sm3a from Scolopendra morsitans (Tanzanian blue ringleg centipede).